The sequence spans 272 residues: Undecaprenyl-diphosphatase (272 aa).

Transmembrane regions (helical) follow at residues 1–21 (MSYL…FLPI), 38–58 (PGAT…VVFF), 84–104 (VRMG…GYLF), 112–132 (FRSL…LGLA), 145–165 (MTYG…VPGV), 183–203 (PVAA…SGLY), 219–239 (QTAV…AGLM), and 250–270 (FVVY…TGAI).

This sequence belongs to the UppP family.

It localises to the cell membrane. The enzyme catalyses di-trans,octa-cis-undecaprenyl diphosphate + H2O = di-trans,octa-cis-undecaprenyl phosphate + phosphate + H(+). In terms of biological role, catalyzes the dephosphorylation of undecaprenyl diphosphate (UPP). Confers resistance to bacitracin. In Clavibacter michiganensis subsp. michiganensis (strain NCPPB 382), this protein is Undecaprenyl-diphosphatase.